A 137-amino-acid polypeptide reads, in one-letter code: Peptide methionine sulfoxide reductase MsrB (137 aa).

The MsrB domain maps to 7–129; it reads VDDLKENLSE…NSASLSFTDE (123 aa). Residues cysteine 46, cysteine 49, cysteine 95, and cysteine 98 each contribute to the Zn(2+) site. Catalysis depends on cysteine 118, which acts as the Nucleophile.

It belongs to the MsrB Met sulfoxide reductase family. Zn(2+) serves as cofactor.

It carries out the reaction L-methionyl-[protein] + [thioredoxin]-disulfide + H2O = L-methionyl-(R)-S-oxide-[protein] + [thioredoxin]-dithiol. The polypeptide is Peptide methionine sulfoxide reductase MsrB (Escherichia fergusonii (strain ATCC 35469 / DSM 13698 / CCUG 18766 / IAM 14443 / JCM 21226 / LMG 7866 / NBRC 102419 / NCTC 12128 / CDC 0568-73)).